The primary structure comprises 255 residues: Homeobox protein DLX-1 (255 aa).

The segment covering 1 to 14 has biased composition (polar residues); it reads MTMTTMPESLNSPV. Disordered regions lie at residues 1–38 and 95–118; these read MTMT…MSHG and SLAQ…EGGE. Residues 25–36 are compositionally biased toward low complexity; that stretch reads PPNQQMSPSPMS. The span at 100–112 shows a compositional bias: basic and acidic residues; that stretch reads RLEDPGADSEKST. Positions 128–187 form a DNA-binding region, homeobox; sequence IRKPRTIYSSLQLQALNRRFQQTQYLALPERAELAASLGLTQTQVKIWFQNKRSKFKKLM. The tract at residues 204–230 is disordered; sequence ALSAGSPPVPPGWNPNSSSGKGSGGNA.

The protein belongs to the distal-less homeobox family. Interacts with SMAD4 (via homeobox DNA-binding domain). Interacts (via homeobox DNA-binding domain) with POU4F2; this interaction suppresses DLX1-mediated transcriptional activity in postnatal retina and enhances retinal ganglion cell (RGC) differentiation. Expressed in hematopoietic cell lines.

It is found in the nucleus. In terms of biological role, plays a role as a transcriptional activator or repressor. Inhibits several cytokine signaling pathways, such as TGFB1, activin-A/INHBA and BMP4 by interfering with the transcriptional stimulatory activity of transcription factors, such as MSX2, FAST2, SMAD2 and SMAD3 during hematopoietic cell differentiation. Plays a role in terminal differentiation of interneurons, such as amacrine and bipolar cells in the developing retina. Likely to play a regulatory role in the development of the ventral forebrain. May play a role in craniofacial patterning and morphogenesis and may be involved in the early development of diencephalic subdivisions. The chain is Homeobox protein DLX-1 (DLX1) from Homo sapiens (Human).